The primary structure comprises 1709 residues: Intraflagellar transport protein 122 (1709 aa).

WD repeat units follow at residues 51-89 and 132-171; these read TQHP…ALFK and SFKG…LNSC. Residues 209-229 are disordered; sequence TIPQTVTPSASASGRSGSGKR. One copy of the WD 3 repeat lies at 634–673; it reads LHRSPIVSLDISPDRKYISVVDRSDVVSVYKFLDDSEIVL. The LRR 1 repeat unit spans residues 1231–1256; that stretch reads IEALERLRLSGNTSKEAIIIKQLIDA. Residues 1378-1404 form a disordered region; sequence LSGEDTVKASSQRSKKDNPPSLRSTIG. The stretch at 1414 to 1436 is one LRR 2 repeat; sequence LGSLAHIDLGINNMNIPPGISEL.

Its subcellular location is the cell projection. It localises to the cilium. It is found in the flagellum. The protein resides in the cytoplasm. The protein localises to the cytoskeleton. Its subcellular location is the flagellum axoneme. It localises to the flagellum basal body. Its function is as follows. Component of the intraflagellar transport complex A (IFT-A) involved in flagellar assembly. The sequence is that of Intraflagellar transport protein 122 from Giardia intestinalis (strain ATCC 50803 / WB clone C6) (Giardia lamblia).